A 290-amino-acid polypeptide reads, in one-letter code: Pirin (290 aa).

Fe cation is bound by residues His-56, His-58, His-101, and Glu-103.

It belongs to the pirin family. In terms of assembly, may interact with NF1/CTF1. Interacts with BCL3. Identified in a complex comprised of PIR, BLC3, NFKB1 and target DNA. Requires Fe cation as cofactor. In terms of tissue distribution, highly expressed in a subset of melanomas. Detected at very low levels in most tissues (at protein level). Expressed in all tissues, with highest level of expression in heart and liver.

It localises to the nucleus. Its subcellular location is the cytoplasm. It carries out the reaction quercetin + O2 = 2-(3,4-dihydroxybenzoyloxy)-4,6-dihydroxybenzoate + CO. It participates in flavonoid metabolism; quercetin degradation. Inhibited by kojic acid, sodium diethyldithiocarbamate and 1,10-phenanthroline monohydrochloride. Its function is as follows. Transcriptional coregulator of NF-kappa-B which facilitates binding of NF-kappa-B proteins to target kappa-B genes in a redox-state-dependent manner. May be required for efficient terminal myeloid maturation of hematopoietic cells. Has quercetin 2,3-dioxygenase activity (in vitro). The protein is Pirin (PIR) of Homo sapiens (Human).